Here is a 154-residue protein sequence, read N- to C-terminus: uncharacterized protein (154 aa).

Its subcellular location is the mitochondrion. This is an uncharacterized protein from Arabidopsis thaliana (Mouse-ear cress).